A 248-amino-acid chain; its full sequence is 1-(5-phosphoribosyl)-5-[(5-phosphoribosylamino)methylideneamino] imidazole-4-carboxamide isomerase (248 aa).

Asp-8 (proton acceptor) is an active-site residue. Catalysis depends on Asp-131, which acts as the Proton donor.

Belongs to the HisA/HisF family.

The protein localises to the cytoplasm. It catalyses the reaction 1-(5-phospho-beta-D-ribosyl)-5-[(5-phospho-beta-D-ribosylamino)methylideneamino]imidazole-4-carboxamide = 5-[(5-phospho-1-deoxy-D-ribulos-1-ylimino)methylamino]-1-(5-phospho-beta-D-ribosyl)imidazole-4-carboxamide. Its pathway is amino-acid biosynthesis; L-histidine biosynthesis; L-histidine from 5-phospho-alpha-D-ribose 1-diphosphate: step 4/9. This Cupriavidus pinatubonensis (strain JMP 134 / LMG 1197) (Cupriavidus necator (strain JMP 134)) protein is 1-(5-phosphoribosyl)-5-[(5-phosphoribosylamino)methylideneamino] imidazole-4-carboxamide isomerase.